The sequence spans 361 residues: 1D-myo-inositol 2-acetamido-2-deoxy-alpha-D-glucopyranoside deacetylase (361 aa).

Positions Met1 to Asp12 are enriched in pro residues. A disordered region spans residues Met1–Asp27. Residues Glu16–Gly25 show a composition bias toward low complexity. 3 residues coordinate Zn(2+): His66, Asp69, and His207.

This sequence belongs to the MshB deacetylase family. The cofactor is Zn(2+).

The catalysed reaction is 1D-myo-inositol 2-acetamido-2-deoxy-alpha-D-glucopyranoside + H2O = 1D-myo-inositol 2-amino-2-deoxy-alpha-D-glucopyranoside + acetate. In terms of biological role, catalyzes the deacetylation of 1D-myo-inositol 2-acetamido-2-deoxy-alpha-D-glucopyranoside (GlcNAc-Ins) in the mycothiol biosynthesis pathway. This Kineococcus radiotolerans (strain ATCC BAA-149 / DSM 14245 / SRS30216) protein is 1D-myo-inositol 2-acetamido-2-deoxy-alpha-D-glucopyranoside deacetylase.